The chain runs to 208 residues: Single-stranded DNA-binding protein DdrA (208 aa).

This sequence belongs to the RAD52 family. Homooligomer composed of 8 to 10 subunits; probably arranged in a ring-structure.

SsDNA-binding protein that contributes to the ionizing radiation resistance of D.radiodurans. Plays a role in DNA repair and genome reconstitution, in a RecA-independent process, since DdrA is essential for recovery from severe genomic fragmentation as a result of exposure to severe levels of ionizing radiation in an environment lacking nutrients. In vitro, binds to the 3'-ends of single-stranded DNA, protecting them from nuclease degradation. Thus, DdrA is part of a DNA end-protection system that helps to preserve genome integrity following irradiation or desiccation. Does not display DNA strand annealing activity, unlike eukaryotic Rad52 protein homologs. In Deinococcus radiodurans (strain ATCC 13939 / DSM 20539 / JCM 16871 / CCUG 27074 / LMG 4051 / NBRC 15346 / NCIMB 9279 / VKM B-1422 / R1), this protein is Single-stranded DNA-binding protein DdrA (ddrA).